A 117-amino-acid polypeptide reads, in one-letter code: MWQPPTQNGTQLERHWFESVWRSHAAFCSCGDCIGHLQHLATNLGRPPAPQPPRDQHPPHIRGLPALPAPPSNRNSWPGTGGDAAGGEAGGSRGAGDGGDGELADEDLLDAIALAAE.

Residues 43–104 form a disordered region; it reads NLGRPPAPQP…AGDGGDGELA (62 aa). Positions 79 to 98 are enriched in gly residues; the sequence is GTGGDAAGGEAGGSRGAGDG.

This Homo sapiens (Human) protein is ORF2 protein.